We begin with the raw amino-acid sequence, 270 residues long: Tetraspanin-17 (270 aa).

Residues 1-19 (MPGKHQQFQDPEVGCCGKY) lie on the Cytoplasmic side of the membrane. A helical membrane pass occupies residues 20 to 40 (FLFGFNIVFWVLGALFLAIGL). At 41-63 (WAWGEKGVLSNISGLTDLGGLDP) the chain is on the extracellular side. An N-linked (GlcNAc...) asparagine glycan is attached at Asn-51. Residues 64 to 84 (VWLFVVIGGIMSVLGFAGCIG) form a helical membrane-spanning segment. Over 85 to 94 (ALRENTFLLK) the chain is Cytoplasmic. A helical membrane pass occupies residues 95-115 (FFSVFLGLIFFLELAAGILAF). At 116–234 (VFKDWIRDQL…GQFEKWLQDN (119 aa)) the chain is on the extracellular side. 4 disulfide bridges follow: Cys-155–Cys-223, Cys-156–Cys-188, Cys-172–Cys-182, and Cys-189–Cys-202. N-linked (GlcNAc...) asparagine glycosylation is present at Asn-171. The chain crosses the membrane as a helical span at residues 235 to 255 (LIVVAGVLVAIALLQICGICL). Topologically, residues 256 to 270 (AQNLVSDIEAVKANW) are cytoplasmic.

This sequence belongs to the tetraspanin (TM4SF) family. As to quaternary structure, interacts with ADAM10; the interaction influences ADAM10 substrate specificity, endocytosis and turnover.

It localises to the cell membrane. Part of TspanC8 subgroup, composed of 6 members that interact with the transmembrane metalloprotease ADAM10. This interaction is required for ADAM10 exit from the endoplasmic reticulum and for enzymatic maturation and trafficking to the cell surface as well as substrate specificity. Different TspanC8/ADAM10 complexes have distinct substrates. Seems to regulate VE-cadherin expression in endothelial cells probably through interaction with ADAM10, promoting leukocyte transmigration. This chain is Tetraspanin-17 (Tspan17), found in Rattus norvegicus (Rat).